A 377-amino-acid chain; its full sequence is Succinyl-diaminopimelate desuccinylase (377 aa).

His67 serves as a coordination point for Zn(2+). Residue Asp69 is part of the active site. Asp100 provides a ligand contact to Zn(2+). Catalysis depends on Glu134, which acts as the Proton acceptor. Residues Glu135, Glu163, and His349 each contribute to the Zn(2+) site.

This sequence belongs to the peptidase M20A family. DapE subfamily. In terms of assembly, homodimer. It depends on Zn(2+) as a cofactor. Co(2+) serves as cofactor.

It catalyses the reaction N-succinyl-(2S,6S)-2,6-diaminopimelate + H2O = (2S,6S)-2,6-diaminopimelate + succinate. Its pathway is amino-acid biosynthesis; L-lysine biosynthesis via DAP pathway; LL-2,6-diaminopimelate from (S)-tetrahydrodipicolinate (succinylase route): step 3/3. Its function is as follows. Catalyzes the hydrolysis of N-succinyl-L,L-diaminopimelic acid (SDAP), forming succinate and LL-2,6-diaminopimelate (DAP), an intermediate involved in the bacterial biosynthesis of lysine and meso-diaminopimelic acid, an essential component of bacterial cell walls. The sequence is that of Succinyl-diaminopimelate desuccinylase from Mannheimia succiniciproducens (strain KCTC 0769BP / MBEL55E).